The following is a 371-amino-acid chain: MGTKTKKTLFNVDEQMKAIAAQFETLQILNEKGEVVNEAAMPELSDDQLKELMRRMVYTRVLDQRSISLNRQGRLGFYAPTAGQEASQLASHFALEAEDFILPGYRDVPQLVWHGLPLYQAFLFSRGHFMGNQMPENVNALAPQIIIGAQIIQTAGVALGMKLRGKKSVAITYTGDGGASQGDFYEGMNFAGAFKAPAIFVVQNNRYAISTPVEKQSAAKTVAQKAVAAGIYGIQVDGMDPLAVYAATAFARERAVNGEGPTLIETLTFRYGPHTMAGDDPTRYRTKDIENEWEQKDPIVRFRAFLENKGLWSQEVEEKVIEEAKEDIKQAIAKADQAPKQKVTDLMEIMYEKMPYNLAEQYEIYKEKESK.

As to quaternary structure, heterodimer of an alpha and a beta chain. The cofactor is thiamine diphosphate.

It carries out the reaction N(6)-[(R)-lipoyl]-L-lysyl-[protein] + pyruvate + H(+) = N(6)-[(R)-S(8)-acetyldihydrolipoyl]-L-lysyl-[protein] + CO2. Its function is as follows. The pyruvate dehydrogenase complex catalyzes the overall conversion of pyruvate to acetyl-CoA and CO(2). It contains multiple copies of three enzymatic components: pyruvate dehydrogenase (E1), dihydrolipoamide acetyltransferase (E2) and lipoamide dehydrogenase (E3). This chain is Pyruvate dehydrogenase E1 component subunit alpha, found in Bacillus cereus.